Reading from the N-terminus, the 211-residue chain is Thiamine-phosphate synthase (211 aa).

Residues 37-41 (QYRDK) and asparagine 69 each bind 4-amino-2-methyl-5-(diphosphooxymethyl)pyrimidine. Residues aspartate 70 and aspartate 89 each coordinate Mg(2+). A 4-amino-2-methyl-5-(diphosphooxymethyl)pyrimidine-binding site is contributed by serine 108. 135 to 137 (SPT) contributes to the 2-[(2R,5Z)-2-carboxy-4-methylthiazol-5(2H)-ylidene]ethyl phosphate binding site. Lysine 138 provides a ligand contact to 4-amino-2-methyl-5-(diphosphooxymethyl)pyrimidine. 2-[(2R,5Z)-2-carboxy-4-methylthiazol-5(2H)-ylidene]ethyl phosphate is bound by residues glycine 165 and 185–186 (LS).

Belongs to the thiamine-phosphate synthase family. Mg(2+) is required as a cofactor.

The enzyme catalyses 2-[(2R,5Z)-2-carboxy-4-methylthiazol-5(2H)-ylidene]ethyl phosphate + 4-amino-2-methyl-5-(diphosphooxymethyl)pyrimidine + 2 H(+) = thiamine phosphate + CO2 + diphosphate. It catalyses the reaction 2-(2-carboxy-4-methylthiazol-5-yl)ethyl phosphate + 4-amino-2-methyl-5-(diphosphooxymethyl)pyrimidine + 2 H(+) = thiamine phosphate + CO2 + diphosphate. The catalysed reaction is 4-methyl-5-(2-phosphooxyethyl)-thiazole + 4-amino-2-methyl-5-(diphosphooxymethyl)pyrimidine + H(+) = thiamine phosphate + diphosphate. It participates in cofactor biosynthesis; thiamine diphosphate biosynthesis; thiamine phosphate from 4-amino-2-methyl-5-diphosphomethylpyrimidine and 4-methyl-5-(2-phosphoethyl)-thiazole: step 1/1. In terms of biological role, condenses 4-methyl-5-(beta-hydroxyethyl)thiazole monophosphate (THZ-P) and 2-methyl-4-amino-5-hydroxymethyl pyrimidine pyrophosphate (HMP-PP) to form thiamine monophosphate (TMP). The polypeptide is Thiamine-phosphate synthase (Thiobacillus denitrificans (strain ATCC 25259 / T1)).